A 206-amino-acid chain; its full sequence is FMN-dependent NADH:quinone oxidoreductase 2 (206 aa).

FMN-binding positions include Ser-10, 16–18 (SYS), and 140–143 (SCGG).

Belongs to the azoreductase type 1 family. As to quaternary structure, homodimer. FMN serves as cofactor.

The enzyme catalyses 2 a quinone + NADH + H(+) = 2 a 1,4-benzosemiquinone + NAD(+). The catalysed reaction is N,N-dimethyl-1,4-phenylenediamine + anthranilate + 2 NAD(+) = 2-(4-dimethylaminophenyl)diazenylbenzoate + 2 NADH + 2 H(+). Quinone reductase that provides resistance to thiol-specific stress caused by electrophilic quinones. Functionally, also exhibits azoreductase activity. Catalyzes the reductive cleavage of the azo bond in aromatic azo compounds to the corresponding amines. This is FMN-dependent NADH:quinone oxidoreductase 2 from Cupriavidus pinatubonensis (strain JMP 134 / LMG 1197) (Cupriavidus necator (strain JMP 134)).